The sequence spans 226 residues: ATP-dependent dethiobiotin synthetase BioD (226 aa).

ATP is bound at residue 12–17 (GVGKTV). T16 lines the Mg(2+) pocket. The active site involves K37. T41 is a binding site for substrate. Residues D49, 108 to 111 (EGAG), 169 to 170 (GS), and 197 to 199 (PAG) each bind ATP. Positions 49 and 108 each coordinate Mg(2+).

It belongs to the dethiobiotin synthetase family. In terms of assembly, homodimer. Mg(2+) serves as cofactor.

It is found in the cytoplasm. The catalysed reaction is (7R,8S)-7,8-diammoniononanoate + CO2 + ATP = (4R,5S)-dethiobiotin + ADP + phosphate + 3 H(+). The protein operates within cofactor biosynthesis; biotin biosynthesis; biotin from 7,8-diaminononanoate: step 1/2. Its function is as follows. Catalyzes a mechanistically unusual reaction, the ATP-dependent insertion of CO2 between the N7 and N8 nitrogen atoms of 7,8-diaminopelargonic acid (DAPA, also called 7,8-diammoniononanoate) to form a ureido ring. The polypeptide is ATP-dependent dethiobiotin synthetase BioD (Mycobacterium tuberculosis (strain ATCC 25177 / H37Ra)).